Here is a 1049-residue protein sequence, read N- to C-terminus: MKPLTGNYDPKKIEDEIISFWEENKIYNKLRDIVSKRREKFLFIDGPPYPSSPTPHIGTIWNKVIKDCILRYERLLGKKVHDQPGYDTHGLPIEVATERLLGILNKQEIIDKIGVENFINKCKEFALSNATKMTQNFKDVGVFMDWERPYYTLDPSYISSSWSVIKKAYEKGMLDKGTAVLHWCPRCETTLSDYEVSEYRDLEDPSIYVKFKIKGEENRYLLIWTTTPWTIPSNVFVMVNKDYDYADVEVNGEVLVLAKDRIEAVMKEASITNYKVLRTYKGSELIGVKYKHPLRDFVSAQTKLDDFHQVVDAGNVVTLTDGTGLVHAATGHGEEDFLIGQKYGFPVVMFVNDRGEFTEEGGKYKGLKVRDASKVIINDLKSKNALFFEGKIVHRYPVCWRCKTPLVLRAIDQWFIRVTKIKDEMLKEIENVNWIPDWGKSRISNMVKELRDWVISRQRFWGTPLPIWICEKCNNVIVVGSREDLESIAIDSVPNDLHRPWIDNVRVKCNKCGGVAKRIADVADVWFDSGVAFFASLGKDWQEKWKELGPVDLVLEGHDQLRGWFFSLLRSGLILLDKAPYVSVLVHGFMLDEQGREMHKSLGNYVEPSVVIQRYGRDILRLWLLRNTTWEDARFSWRALELTKRDLQIIWNTYVFASMYMNLDNFEPVKYTLDDVIKYAKIEDLWILSRFNSMLKKVNESMKNYKVHEMANYLINFLVEDVSRFYIRLIRKRAWIEANTQDKIAMYYILYFILKQWIILASTIIPFISEKIYKSFVVNPKESVSMESSINYDERFIDNELERAFEVAREINEASLNARAKAGIKLRWPLAKVYIFVEDEDTLAKVNRIKDVLLSLLNAKDIEISKIEGFKSFSKYKVEPNRSIIGKEYKSMSPKILDYIRNNSDIIAIDILNKKQHVARIDNVDVILNTSHVIISEETIEGYVSSKFAQGIVVISKEISESEEEEGLVRDIIRRIQFMRKQLKLNVVDYIEISIKAPEERVKTIQKWEEFIKSETRGNKVILGDPKGDIVMDWDIEGESYIIGIKKST.

A 'HIGH' region motif is present at residues 48-59 (PYPSSPTPHIGT). A 'KMSKS' region motif is present at residues 597–601 (EMHKS). Lysine 600 lines the ATP pocket.

The protein belongs to the class-I aminoacyl-tRNA synthetase family. IleS type 2 subfamily. In terms of assembly, monomer. Requires Zn(2+) as cofactor.

The protein resides in the cytoplasm. It carries out the reaction tRNA(Ile) + L-isoleucine + ATP = L-isoleucyl-tRNA(Ile) + AMP + diphosphate. In terms of biological role, catalyzes the attachment of isoleucine to tRNA(Ile). As IleRS can inadvertently accommodate and process structurally similar amino acids such as valine, to avoid such errors it has two additional distinct tRNA(Ile)-dependent editing activities. One activity is designated as 'pretransfer' editing and involves the hydrolysis of activated Val-AMP. The other activity is designated 'posttransfer' editing and involves deacylation of mischarged Val-tRNA(Ile). The protein is Isoleucine--tRNA ligase of Saccharolobus islandicus (strain M.16.27) (Sulfolobus islandicus).